The sequence spans 668 residues: ATP-dependent RNA helicase MSS116, mitochondrial (668 aa).

The N-terminal 38 residues, 1–38, are a transit peptide targeting the mitochondrion; that stretch reads MLKQLSRSLGIRSSPIVANLIRSKQVCTRGFHISLVKQ. A Q motif motif is present at residues 87–115; sequence DFKGKGYIHDSIINSLHKNDFKELTPIQQ. Residues 119–300 form the Helicase ATP-binding domain; sequence VPIFNTEKGL…KKHIHPEYEF (182 aa). 132-139 provides a ligand contact to ATP; it reads AKTGTGKT. A DEAD box motif is present at residues 242–245; it reads DEAD. Positions 332–501 constitute a Helicase C-terminal domain; sequence SLSELHGIMK…NIIDQIESPL (170 aa). A disordered region spans residues 585 to 668; sequence YSDFSRSGMS…EHRRIRDHDE (84 aa). Polar residues predominate over residues 586 to 597; that stretch reads SDFSRSGMSQRP. Low complexity predominate over residues 609 to 636; the sequence is NGRGKYGNNRNNDWSYQNKNRYNNNNNR. Basic and acidic residues predominate over residues 637 to 668; that stretch reads QTERSYDSDRKSHNDWKYEKKFEHRRIRDHDE.

This sequence belongs to the DEAD box helicase family. DDX18/HAS1 subfamily.

It localises to the mitochondrion matrix. The catalysed reaction is ATP + H2O = ADP + phosphate + H(+). ATP-dependent RNA helicase required for mitochondrial splicing of group I and II introns. Also required for efficient mitochondrial translation. The chain is ATP-dependent RNA helicase MSS116, mitochondrial (MSS116) from Candida albicans (strain SC5314 / ATCC MYA-2876) (Yeast).